Consider the following 341-residue polypeptide: Enduracididine beta-hydroxylase (341 aa).

Fe cation-binding residues include histidine 146 and glutamate 148. A disordered region spans residues 203–223 (HRIHGKAPGDESARESALRER). Histidine 300 is a Fe cation binding site.

Belongs to the clavaminate synthase family. Requires Fe(2+) as cofactor.

It carries out the reaction L-enduracididine + 2-oxoglutarate + O2 = (3S)-3-hydroxy-L-enduracididine + succinate + CO2. The protein operates within antibiotic biosynthesis. Its function is as follows. Hydroxylates the beta carbon of free L-enduracididine to produce (3S)-3-hydroxy-L-enduracididine in biosynthesis of the nonproteinogenic amino acid beta-hydroxyenduracididine, a component of antibiotic mannopeptimycin. The chain is Enduracididine beta-hydroxylase (mppO) from Streptomyces hygroscopicus.